Consider the following 274-residue polypeptide: Large ribosomal subunit protein uL2cz/uL2cy (274 aa).

Disordered regions lie at residues 1-22 (MAIH…DSQV) and 225-252 (PVDH…GYPA).

This sequence belongs to the universal ribosomal protein uL2 family. Part of the 50S ribosomal subunit.

Its subcellular location is the plastid. The protein resides in the chloroplast. In Barbarea verna (Land cress), this protein is Large ribosomal subunit protein uL2cz/uL2cy (rpl2-A).